A 158-amino-acid polypeptide reads, in one-letter code: MAIDGILKQGFITTSADKFLNWAKTGSMWPMTFGLACCAVEMMHAGAARYDLDQFGIIFRPSPRQSDLMIVAGTLCNKMAPALRKVYDQMPEPRWVVSMGSCANGGGYYHYSYSVVRGCDRIVPVDVYVPGCPPTAEALVYGLLQMQNKIRLTNTIAR.

Residues C37, C38, C102, and C132 each coordinate [4Fe-4S] cluster.

It belongs to the complex I 20 kDa subunit family. NDH-1 is composed of 14 different subunits. Subunits NuoB, C, D, E, F, and G constitute the peripheral sector of the complex. [4Fe-4S] cluster serves as cofactor.

It localises to the cell inner membrane. The catalysed reaction is a quinone + NADH + 5 H(+)(in) = a quinol + NAD(+) + 4 H(+)(out). Functionally, NDH-1 shuttles electrons from NADH, via FMN and iron-sulfur (Fe-S) centers, to quinones in the respiratory chain. Couples the redox reaction to proton translocation (for every two electrons transferred, four hydrogen ions are translocated across the cytoplasmic membrane), and thus conserves the redox energy in a proton gradient. This Bordetella petrii (strain ATCC BAA-461 / DSM 12804 / CCUG 43448) protein is NADH-quinone oxidoreductase subunit B.